We begin with the raw amino-acid sequence, 173 residues long: Calmodulin-like protein 11 (173 aa).

The segment covering 1 to 26 has biased composition (low complexity); the sequence is MEEIQQQQQQQQQQQQQQQQQQQQQQ. A disordered region spans residues 1-27; it reads MEEIQQQQQQQQQQQQQQQQQQQQQQE. 4 EF-hand domains span residues 31 to 66, 67 to 102, 104 to 139, and 140 to 173; these read EQIM…LDQN, PTEQ…QLQE, DADE…LGEK, and LTDE…MING. 20 residues coordinate Ca(2+): aspartate 44, aspartate 46, aspartate 48, cysteine 50, glutamate 55, aspartate 80, aspartate 82, asparagine 84, threonine 86, glutamate 91, aspartate 117, aspartate 119, asparagine 121, tyrosine 123, glutamate 128, aspartate 153, aspartate 155, aspartate 157, glutamine 159, and glutamate 164.

The protein belongs to the calmodulin family.

In terms of biological role, potential calcium sensor. The sequence is that of Calmodulin-like protein 11 (CML11) from Arabidopsis thaliana (Mouse-ear cress).